The following is a 187-amino-acid chain: uncharacterized protein (187 aa).

The tract at residues 131–187 (VAEKKDQRKKKPKVKTQGENAPVAKSAGENSGKLEEQKDERKGIAKDIDDFFGGIDG) is disordered. Residues 162–179 (GKLEEQKDERKGIAKDID) are compositionally biased toward basic and acidic residues.

This is an uncharacterized protein from Haemophilus influenzae (Bacteriophage HP1).